The chain runs to 357 residues: DNA integrity scanning protein DisA (357 aa).

One can recognise a DAC domain in the interval R3 to S141. Residues G70, L88, and T101–S105 contribute to the ATP site.

It belongs to the DisA family. Homooctamer. Mg(2+) is required as a cofactor.

The enzyme catalyses 2 ATP = 3',3'-c-di-AMP + 2 diphosphate. Functionally, participates in a DNA-damage check-point. DisA forms globular foci that rapidly scan along the chromosomes searching for lesions. In terms of biological role, also has diadenylate cyclase activity, catalyzing the condensation of 2 ATP molecules into cyclic di-AMP (c-di-AMP). c-di-AMP likely acts as a signaling molecule that may couple DNA integrity with a cellular process. In Mycolicibacterium paratuberculosis (strain ATCC BAA-968 / K-10) (Mycobacterium paratuberculosis), this protein is DNA integrity scanning protein DisA.